An 89-amino-acid polypeptide reads, in one-letter code: Small ribosomal subunit protein uS15 (89 aa).

It belongs to the universal ribosomal protein uS15 family. In terms of assembly, part of the 30S ribosomal subunit. Forms a bridge to the 50S subunit in the 70S ribosome, contacting the 23S rRNA.

Its function is as follows. One of the primary rRNA binding proteins, it binds directly to 16S rRNA where it helps nucleate assembly of the platform of the 30S subunit by binding and bridging several RNA helices of the 16S rRNA. Forms an intersubunit bridge (bridge B4) with the 23S rRNA of the 50S subunit in the ribosome. The chain is Small ribosomal subunit protein uS15 from Bradyrhizobium sp. (strain BTAi1 / ATCC BAA-1182).